Reading from the N-terminus, the 238-residue chain is Ribonuclease PH (238 aa).

Phosphate contacts are provided by residues R86 and 124–126 (GTR).

The protein belongs to the RNase PH family. In terms of assembly, homohexameric ring arranged as a trimer of dimers.

It catalyses the reaction tRNA(n+1) + phosphate = tRNA(n) + a ribonucleoside 5'-diphosphate. Phosphorolytic 3'-5' exoribonuclease that plays an important role in tRNA 3'-end maturation. Removes nucleotide residues following the 3'-CCA terminus of tRNAs; can also add nucleotides to the ends of RNA molecules by using nucleoside diphosphates as substrates, but this may not be physiologically important. Probably plays a role in initiation of 16S rRNA degradation (leading to ribosome degradation) during starvation. The sequence is that of Ribonuclease PH from Shigella dysenteriae serotype 1 (strain Sd197).